We begin with the raw amino-acid sequence, 305 residues long: tRNA pseudouridine synthase B (305 aa).

Residue Asp-48 is the Nucleophile of the active site.

Belongs to the pseudouridine synthase TruB family. Type 1 subfamily.

The catalysed reaction is uridine(55) in tRNA = pseudouridine(55) in tRNA. Functionally, responsible for synthesis of pseudouridine from uracil-55 in the psi GC loop of transfer RNAs. The polypeptide is tRNA pseudouridine synthase B (Pseudomonas fluorescens (strain Pf0-1)).